The following is a 715-amino-acid chain: Eosinophil peroxidase (715 aa).

Positions Met1 to Ala17 are cleaved as a signal peptide. The propeptide occupies Gln18 to Glu139. Residues Asn52 and Asn113 are each glycosylated (N-linked (GlcNAc...) asparagine). Cys141 and Cys152 are disulfide-bonded. Asp232 lines the heme b pocket. His233 acts as the Proton acceptor in catalysis. Asp234 is a binding site for Ca(2+). 2 disulfide bridges follow: Cys253/Cys263 and Cys257/Cys281. Ca(2+) contacts are provided by Thr306, Phe308, Asp310, and Ser312. Asn327 and Asn363 each carry an N-linked (GlcNAc...) asparagine glycan. Cys359 and Cys370 are joined by a disulfide. Positions 380 and 474 each coordinate heme b. Tyr488 carries the post-translational modification 3'-nitrotyrosine. 2 cysteine pairs are disulfide-bonded: Cys578/Cys635 and Cys676/Cys701. Asn700 and Asn708 each carry an N-linked (GlcNAc...) asparagine glycan.

It belongs to the peroxidase family. XPO subfamily. As to quaternary structure, tetramer of two light chains and two heavy chains. Requires Ca(2+) as cofactor. Heme b serves as cofactor.

The protein localises to the cytoplasmic granule. It catalyses the reaction 2 a phenolic donor + H2O2 = 2 a phenolic radical donor + 2 H2O. Mediates tyrosine nitration of secondary granule proteins in mature resting eosinophils. Shows significant inhibitory activity towards Mycobacterium tuberculosis H37Rv by inducing bacterial fragmentation and lysis. The polypeptide is Eosinophil peroxidase (EPX) (Homo sapiens (Human)).